We begin with the raw amino-acid sequence, 592 residues long: Vacuolin-B (592 aa).

Over residues 1-30 (MIESSSFMKKTSSENSIGSRSNIHEASTFS) the composition is skewed to polar residues. The disordered stretch occupies residues 1–35 (MIESSSFMKKTSSENSIGSRSNIHEASTFSSEHEN). Positions 480–534 (KTTEARLKAETDNIALEQKGKAIIAEAQAKLESAQKQAQALLITAEAQKKVQEMQ) form a coiled coil. An oligomerization domain region spans residues 491 to 555 (DNIALEQKGK…EIELAKIKSE (65 aa)).

This sequence belongs to the vacuolin family. As to quaternary structure, homotrimer.

The protein resides in the endosome membrane. The protein localises to the lysosome membrane. In terms of biological role, negative regulator of late steps of the endocytic pathway. The chain is Vacuolin-B (vacB) from Dictyostelium discoideum (Social amoeba).